Consider the following 156-residue polypeptide: Peptidyl-prolyl cis-trans isomerase cypE (156 aa).

One can recognise a PPIase cyclophilin-type domain in the interval 2–155 (TEQTVTLQTT…DEIRIIKATA (154 aa)).

The protein belongs to the cyclophilin-type PPIase family. Interacts with snwA.

Its subcellular location is the cytoplasm. The protein resides in the nucleus. It catalyses the reaction [protein]-peptidylproline (omega=180) = [protein]-peptidylproline (omega=0). Functionally, catalyzes the cis-trans isomerization of proline imidic peptide bonds in oligopeptides. Plays a role in protein folding, transport and assembly. In Dictyostelium discoideum (Social amoeba), this protein is Peptidyl-prolyl cis-trans isomerase cypE (cypE).